The sequence spans 155 residues: 3-dehydroquinate dehydratase (155 aa).

The active-site Proton acceptor is Tyr32. The substrate site is built by Asn84, His90, and Asp97. Residue His110 is the Proton donor of the active site. Residues 111–112 (LS) and Arg121 contribute to the substrate site.

Belongs to the type-II 3-dehydroquinase family. As to quaternary structure, homododecamer.

The catalysed reaction is 3-dehydroquinate = 3-dehydroshikimate + H2O. The protein operates within metabolic intermediate biosynthesis; chorismate biosynthesis; chorismate from D-erythrose 4-phosphate and phosphoenolpyruvate: step 3/7. Its function is as follows. Catalyzes a trans-dehydration via an enolate intermediate. This chain is 3-dehydroquinate dehydratase, found in Ralstonia pickettii (strain 12J).